A 142-amino-acid chain; its full sequence is Large ribosomal subunit protein uL11 (142 aa).

Belongs to the universal ribosomal protein uL11 family. In terms of assembly, part of the ribosomal stalk of the 50S ribosomal subunit. Interacts with L10 and the large rRNA to form the base of the stalk. L10 forms an elongated spine to which L12 dimers bind in a sequential fashion forming a multimeric L10(L12)X complex. One or more lysine residues are methylated.

Functionally, forms part of the ribosomal stalk which helps the ribosome interact with GTP-bound translation factors. This Shewanella amazonensis (strain ATCC BAA-1098 / SB2B) protein is Large ribosomal subunit protein uL11.